Here is a 556-residue protein sequence, read N- to C-terminus: 2-succinyl-5-enolpyruvyl-6-hydroxy-3-cyclohexene-1-carboxylate synthase (556 aa).

The protein belongs to the TPP enzyme family. MenD subfamily. Homodimer. The cofactor is Mg(2+). Mn(2+) is required as a cofactor. Requires thiamine diphosphate as cofactor.

The catalysed reaction is isochorismate + 2-oxoglutarate + H(+) = 5-enolpyruvoyl-6-hydroxy-2-succinyl-cyclohex-3-ene-1-carboxylate + CO2. It functions in the pathway quinol/quinone metabolism; 1,4-dihydroxy-2-naphthoate biosynthesis; 1,4-dihydroxy-2-naphthoate from chorismate: step 2/7. It participates in quinol/quinone metabolism; menaquinone biosynthesis. Catalyzes the thiamine diphosphate-dependent decarboxylation of 2-oxoglutarate and the subsequent addition of the resulting succinic semialdehyde-thiamine pyrophosphate anion to isochorismate to yield 2-succinyl-5-enolpyruvyl-6-hydroxy-3-cyclohexene-1-carboxylate (SEPHCHC). This Salmonella choleraesuis (strain SC-B67) protein is 2-succinyl-5-enolpyruvyl-6-hydroxy-3-cyclohexene-1-carboxylate synthase.